The chain runs to 223 residues: Urease accessory protein UreF (223 aa).

The protein belongs to the UreF family. UreD, UreF and UreG form a complex that acts as a GTP-hydrolysis-dependent molecular chaperone, activating the urease apoprotein by helping to assemble the nickel containing metallocenter of UreC. The UreE protein probably delivers the nickel.

It is found in the cytoplasm. Functionally, required for maturation of urease via the functional incorporation of the urease nickel metallocenter. The chain is Urease accessory protein UreF from Pseudomonas paraeruginosa (strain DSM 24068 / PA7) (Pseudomonas aeruginosa (strain PA7)).